Here is a 562-residue protein sequence, read N- to C-terminus: Cytosolic Fe-S cluster assembly factor nar1 (562 aa).

C20 serves as a coordination point for [4Fe-4S] cluster. A disordered region spans residues 28–47; the sequence is PKNESSNSQNPYEVTTEDKV. Positions 29–40 are enriched in polar residues; it reads KNESSNSQNPYE. The [4Fe-4S] cluster site is built by C62, C65, C68, C214, and C269. Residues 439-462 are disordered; sequence ARVPAASAGGNRRQPISRNSASAG. The segment covering 452–462 has biased composition (polar residues); that stretch reads QPISRNSASAG. 2 residues coordinate [4Fe-4S] cluster: C475 and C479. Disordered regions lie at residues 492-513 and 541-562; these read REAS…PTPH and HSPS…IGLT. A compositionally biased stretch (polar residues) spans 494–505; it reads ASTSTQSVTAVE.

It belongs to the NARF family.

Its function is as follows. Component of the cytosolic Fe/S protein assembly machinery. Required for maturation of extramitochondrial Fe/S proteins. May play a role in the transfer of pre-assembled Fe/S clusters to target apoproteins. This chain is Cytosolic Fe-S cluster assembly factor nar1 (nar1), found in Aspergillus flavus (strain ATCC 200026 / FGSC A1120 / IAM 13836 / NRRL 3357 / JCM 12722 / SRRC 167).